Consider the following 318-residue polypeptide: NADH-ubiquinone oxidoreductase chain 1 (318 aa).

Helical transmembrane passes span 2–22 (PVIN…FLML), 69–89 (ILYI…WTPL), 100–120 (LGLL…LWSG), 146–166 (LALI…STLI), 171–191 (HSWL…STLA), 222–242 (LFFM…AMIF), 253–273 (ELHT…FLWI), and 294–314 (LPLT…TSGI).

This sequence belongs to the complex I subunit 1 family. Core subunit of respiratory chain NADH dehydrogenase (Complex I) which is composed of 45 different subunits.

The protein localises to the mitochondrion inner membrane. It carries out the reaction a ubiquinone + NADH + 5 H(+)(in) = a ubiquinol + NAD(+) + 4 H(+)(out). Functionally, core subunit of the mitochondrial membrane respiratory chain NADH dehydrogenase (Complex I) which catalyzes electron transfer from NADH through the respiratory chain, using ubiquinone as an electron acceptor. Essential for the catalytic activity and assembly of complex I. The protein is NADH-ubiquinone oxidoreductase chain 1 (MT-ND1) of Pongo pygmaeus (Bornean orangutan).